Here is a 181-residue protein sequence, read N- to C-terminus: MMYSAIASKYALALYNISKTNGKTETYKELLNILGDIYNLASVYLNNQAIKPENRVQFVLNIMKELKIEYDEIFRKFINLLIVNKRLKYINQIISFFDYTILEDKGLIPVNVTSAMELSKEEEEILSKFVEKYTNRKPVFNVTVDDSLIAGVVVEFAGKTLDVTVKGRLQNIARNILNREG.

Belongs to the ATPase delta chain family. As to quaternary structure, F-type ATPases have 2 components, F(1) - the catalytic core - and F(0) - the membrane proton channel. F(1) has five subunits: alpha(3), beta(3), gamma(1), delta(1), epsilon(1). F(0) has three main subunits: a(1), b(2) and c(10-14). The alpha and beta chains form an alternating ring which encloses part of the gamma chain. F(1) is attached to F(0) by a central stalk formed by the gamma and epsilon chains, while a peripheral stalk is formed by the delta and b chains.

The protein localises to the cell inner membrane. Functionally, f(1)F(0) ATP synthase produces ATP from ADP in the presence of a proton or sodium gradient. F-type ATPases consist of two structural domains, F(1) containing the extramembraneous catalytic core and F(0) containing the membrane proton channel, linked together by a central stalk and a peripheral stalk. During catalysis, ATP synthesis in the catalytic domain of F(1) is coupled via a rotary mechanism of the central stalk subunits to proton translocation. In terms of biological role, this protein is part of the stalk that links CF(0) to CF(1). It either transmits conformational changes from CF(0) to CF(1) or is implicated in proton conduction. This chain is ATP synthase subunit delta, found in Fervidobacterium nodosum (strain ATCC 35602 / DSM 5306 / Rt17-B1).